We begin with the raw amino-acid sequence, 473 residues long: Sulfate adenylyltransferase subunit 1 (473 aa).

One can recognise a tr-type G domain in the interval Lys-19 to Glu-238. Positions Gly-28–Ser-35 are G1. Gly-28–Ser-35 lines the GTP pocket. Residues Gly-86–Asp-90 form a G2 region. Residues Asp-107–Gly-110 form a G3 region. GTP-binding positions include Asp-107–His-111 and Asn-162–Asp-165. Residues Asn-162–Asp-165 are G4. Residues Ser-200–Leu-202 form a G5 region.

Belongs to the TRAFAC class translation factor GTPase superfamily. Classic translation factor GTPase family. CysN/NodQ subfamily. Heterodimer composed of CysD, the smaller subunit, and CysN.

It carries out the reaction sulfate + ATP + H(+) = adenosine 5'-phosphosulfate + diphosphate. The protein operates within sulfur metabolism; hydrogen sulfide biosynthesis; sulfite from sulfate: step 1/3. Functionally, with CysD forms the ATP sulfurylase (ATPS) that catalyzes the adenylation of sulfate producing adenosine 5'-phosphosulfate (APS) and diphosphate, the first enzymatic step in sulfur assimilation pathway. APS synthesis involves the formation of a high-energy phosphoric-sulfuric acid anhydride bond driven by GTP hydrolysis by CysN coupled to ATP hydrolysis by CysD. The polypeptide is Sulfate adenylyltransferase subunit 1 (Buchnera aphidicola subsp. Acyrthosiphon pisum (strain APS) (Acyrthosiphon pisum symbiotic bacterium)).